A 224-amino-acid chain; its full sequence is Claudin-17 (224 aa).

At 1 to 7 (MAFYPLQ) the chain is on the cytoplasmic side. Residues 8-28 (IAGLVLGFLGMVGTLATTLLP) traverse the membrane as a helical segment. Residues 29–81 (QWRVSAFVGSNIIVFERLWEGLWMNCIRQARVRLQCKFYSSLLALPPALETAR) lie on the Extracellular side of the membrane. A helical transmembrane segment spans residues 82–102 (ALMCVAVALSLIALLIGICGM). Residues 103 to 124 (KQVQCTGSNERAKAYLLGTSGV) are Cytoplasmic-facing. Residues 125–145 (LFILTGIFVLIPVSWTANIII) form a helical membrane-spanning segment. Over 146–164 (RDFYNPAIHIGQKRELGAA) the chain is Extracellular. Residues 165–185 (LFLGWASAAVLFIGGGLLCGF) traverse the membrane as a helical segment. Residues 186-224 (CCCNRKKQGYRYPVPGYRVPHTDKRRNTTMLSKTSTSYV) lie on the Cytoplasmic side of the membrane.

This sequence belongs to the claudin family. Cannot form tight junction strands on its own. Interacts with OCLN. In the kidney, expressed in the proximal tubule and in the Henle's loop. In the distal convoluted tubule, not expressed in all tubules. Not detected in the collecting duct (at protein level).

The protein resides in the cell junction. The protein localises to the tight junction. It localises to the basolateral cell membrane. The enzyme catalyses chloride(in) = chloride(out). It catalyses the reaction hydrogencarbonate(in) = hydrogencarbonate(out). It carries out the reaction bromide(in) = bromide(out). The catalysed reaction is iodide(out) = iodide(in). The enzyme catalyses fluoride(in) = fluoride(out). It catalyses the reaction nitrate(in) = nitrate(out). It carries out the reaction thiocyanate(in) = thiocyanate(out). Channel-forming tight junction protein with selectivity for anions, including chloride and hydrogencarbonate, and for solutes smaller than 9 Angstrom in diameter. In the kidney proximal tubule, may be involved in paracellular reabsorption of filtered anions. Does not affect water permeability. The sequence is that of Claudin-17 (CLDN17) from Homo sapiens (Human).